The following is a 461-amino-acid chain: Phosphoglucosamine mutase (461 aa).

S118 (phosphoserine intermediate) is an active-site residue. Mg(2+)-binding residues include S118, D255, D257, and D259. S118 bears the Phosphoserine mark.

It belongs to the phosphohexose mutase family. Mg(2+) is required as a cofactor. Post-translationally, activated by phosphorylation.

It carries out the reaction alpha-D-glucosamine 1-phosphate = D-glucosamine 6-phosphate. Catalyzes the conversion of glucosamine-6-phosphate to glucosamine-1-phosphate. The polypeptide is Phosphoglucosamine mutase (Acidothermus cellulolyticus (strain ATCC 43068 / DSM 8971 / 11B)).